A 220-amino-acid polypeptide reads, in one-letter code: ATP phosphoribosyltransferase (220 aa).

Belongs to the ATP phosphoribosyltransferase family. Short subfamily. In terms of assembly, heteromultimer composed of HisG and HisZ subunits.

The protein localises to the cytoplasm. The catalysed reaction is 1-(5-phospho-beta-D-ribosyl)-ATP + diphosphate = 5-phospho-alpha-D-ribose 1-diphosphate + ATP. The protein operates within amino-acid biosynthesis; L-histidine biosynthesis; L-histidine from 5-phospho-alpha-D-ribose 1-diphosphate: step 1/9. Functionally, catalyzes the condensation of ATP and 5-phosphoribose 1-diphosphate to form N'-(5'-phosphoribosyl)-ATP (PR-ATP). Has a crucial role in the pathway because the rate of histidine biosynthesis seems to be controlled primarily by regulation of HisG enzymatic activity. This is ATP phosphoribosyltransferase from Anaeromyxobacter sp. (strain Fw109-5).